Here is a 298-residue protein sequence, read N- to C-terminus: Hydroxymethylglutaryl-CoA lyase, mitochondrial (298 aa).

The 268-residue stretch at valine 6–methionine 273 folds into the Pyruvate carboxyltransferase domain. Residue arginine 14 participates in substrate binding. Aspartate 15 serves as a coordination point for a divalent metal cation. At lysine 21 the chain carries N6-acetyllysine. Residues histidine 206 and histidine 208 each coordinate a divalent metal cation. Residue cysteine 239 is part of the active site. Asparagine 248 contacts a divalent metal cation. The Microbody targeting signal motif lies at cysteine 296–leucine 298.

It belongs to the HMG-CoA lyase family. Homodimer; disulfide-linked. Can also form homotetramers.

The protein localises to the mitochondrion matrix. It localises to the peroxisome. It catalyses the reaction (3S)-3-hydroxy-3-methylglutaryl-CoA = acetoacetate + acetyl-CoA. The protein operates within metabolic intermediate metabolism; (S)-3-hydroxy-3-methylglutaryl-CoA degradation; acetoacetate from (S)-3-hydroxy-3-methylglutaryl-CoA: step 1/1. Its function is as follows. Mitochondrial 3-hydroxy-3-methylglutaryl-CoA lyase that catalyzes a cation-dependent cleavage of (S)-3-hydroxy-3-methylglutaryl-CoA into acetyl-CoA and acetoacetate, a key step in ketogenesis. Terminal step in leucine catabolism. Ketone bodies (beta-hydroxybutyrate, acetoacetate and acetone) are essential as an alternative source of energy to glucose, as lipid precursors and as regulators of metabolism. The protein is Hydroxymethylglutaryl-CoA lyase, mitochondrial (HMGCL) of Gallus gallus (Chicken).